Here is a 239-residue protein sequence, read N- to C-terminus: Short palate, lung and nasal epithelium carcinoma-associated protein 2A (239 aa).

The first 20 residues, 1 to 20, serve as a signal peptide directing secretion; the sequence is MVQLWKLVLLCGLLAGTSES. A disulfide bridge connects residues Cys166 and Cys209.

This sequence belongs to the BPI/LBP/Plunc superfamily. Plunc family. In terms of tissue distribution, detected in salivary tissues: parotid, submandibular and sublingual glands.

The protein localises to the secreted. The polypeptide is Short palate, lung and nasal epithelium carcinoma-associated protein 2A (SPLUNC2A) (Bos taurus (Bovine)).